Reading from the N-terminus, the 406-residue chain is Olfactomedin-like protein 3 (406 aa).

The signal sequence occupies residues 1-21 (MGPSAPLLLLFFLSWTGPLQG). A coiled-coil region spans residues 25–101 (HLVEYMERRL…REVDYLETQN (77 aa)). Residues 134 to 401 (DCSYTVAQVR…QIVYKLEMKK (268 aa)) enclose the Olfactomedin-like domain. Cysteine 135 and cysteine 328 are joined by a disulfide. N-linked (GlcNAc...) asparagine glycosylation is found at asparagine 177 and asparagine 248.

It belongs to the OLFML3 family.

Its subcellular location is the secreted. Its function is as follows. Secreted scaffold protein that plays an essential role in dorsoventral patterning during early development. Stabilizes axial formation by restricting chordin (CHRD) activity on the dorsal side. Acts by facilitating the association between the tolloid proteases and their substrate chordin (CHRD), leading to enhance chordin (CHRD) degradation. May have matrix-related function involved in placental and embryonic development, or play a similar role in other physiological processes. The chain is Olfactomedin-like protein 3 (Olfml3) from Mus musculus (Mouse).